A 176-amino-acid polypeptide reads, in one-letter code: Large ribosomal subunit protein uL6 (176 aa).

This sequence belongs to the universal ribosomal protein uL6 family. As to quaternary structure, part of the 50S ribosomal subunit.

Functionally, this protein binds to the 23S rRNA, and is important in its secondary structure. It is located near the subunit interface in the base of the L7/L12 stalk, and near the tRNA binding site of the peptidyltransferase center. The protein is Large ribosomal subunit protein uL6 of Paraburkholderia phymatum (strain DSM 17167 / CIP 108236 / LMG 21445 / STM815) (Burkholderia phymatum).